The following is a 153-amino-acid chain: ORM1-like protein 2 (153 aa).

Topologically, residues 1 to 21 are cytoplasmic; the sequence is MNVGVAHSEVNPNTRVMNSRG. Transmembrane regions (helical) follow at residues 22–42 and 43–63; these read IWLA…SIPF and FSIP…MYVF. At 64–105 the chain is on the cytoplasmic side; the sequence is LHTVKGTPFETPDQGKARLLTHWEQMDYGLQFTSSRKFLSIS. Residues 106–126 form a helical membrane-spanning segment; the sequence is PIVLYLLASFYTKYDAAHFLI. Topologically, residues 127 to 153 are extracellular; sequence NTASLLSVLLPKLPQFHGVRLFGINKY.

This sequence belongs to the ORM family. Ceramide-sensitive subunit of the serine palmitoyltransferase (SPT) complex, which is also composed of SPTLC1, SPTLC2/3 and SPTSSA/B.

Its subcellular location is the endoplasmic reticulum membrane. Its function is as follows. Plays an essential role in the homeostatic regulation of sphingolipid de novo biosynthesis by modulating the activity of the serine palmitoyltransferase (SPT) in response to ceramide levels. When complexed to SPT, the binding of ceramides to its N-terminus stabilizes a conformation that block SPT substrate entry, hence preventing SPT catalytic activity. Through this mechanism, maintains ceramide levels at sufficient concentrations for the production of complex sphingolipids, but which prevents the accumulation of ceramides to levels that trigger apoptosis. The polypeptide is ORM1-like protein 2 (ORMDL2) (Bos taurus (Bovine)).